The following is a 654-amino-acid chain: Macrolide export ATP-binding/permease protein MacB (654 aa).

The ABC transporter domain occupies Ile6–Pro244. Residue Gly42 to Ser49 participates in ATP binding. 4 consecutive transmembrane segments (helical) span residues Phe278–Gly298, Leu527–Met547, Val584–Phe604, and Ser619–Ala639.

The protein belongs to the ABC transporter superfamily. Macrolide exporter (TC 3.A.1.122) family. Homodimer.

The protein localises to the cell inner membrane. In terms of biological role, non-canonical ABC transporter that contains transmembrane domains (TMD), which form a pore in the inner membrane, and an ATP-binding domain (NBD), which is responsible for energy generation. Confers resistance against macrolides. This chain is Macrolide export ATP-binding/permease protein MacB, found in Rhodopseudomonas palustris (strain HaA2).